Consider the following 2803-residue polypeptide: Microtubule-associated protein 1A (2803 aa).

S114, S117, S118, S121, and S155 each carry phosphoserine. Residue Y177 is modified to Phosphotyrosine. Disordered regions lie at residues 302-466 (GAVP…DLKP) and 486-516 (IDRSRAIRGEKELSSEPQTPPAQKGTVPLPT). 3 positions are modified to phosphoserine: S319, S322, and S384. Residues 335-390 (AKREEVVEEGAKEARSELAKELAKTEKKAKESSEKPPEKPAKPERVKTESSEALKA) are compositionally biased toward basic and acidic residues. Over residues 391–406 (EKRKLIKDKVGKKHLK) the composition is skewed to basic residues. Composition is skewed to basic and acidic residues over residues 407–464 (EKIS…KPDL) and 486–499 (IDRSRAIRGEKELS). Repeat copies occupy residues 415–417 (KKD), 420–422 (KKE), 427–429 (RKE), 431–433 (KKD), 436–438 (RKE), 440–442 (KKD), 444–446 (KKE), and 449–451 (RKD). The segment at 415–541 (KKDKEKKEIK…TQDFEEMKRE (127 aa)) is 9 X 3 AA repeats of K-K-[DE]. Residue T504 is modified to Phosphothreonine. Residues S526 and S527 each carry the phosphoserine modification. Residues 539-541 (KRE) form repeat 9. Basic and acidic residues-rich tracts occupy residues 539 to 554 (KREERALLAEQRDTGL) and 585 to 596 (QEEHVMKEKELV). Disordered stretches follow at residues 539 to 712 (KREE…KAPE), 734 to 806 (YIQD…GTPE), 847 to 1080 (EDQS…VNID), 1109 to 1548 (TGPI…EKKD), and 1573 to 1605 (EENHQTQEQESLVQEDKTRKPKMLEEKSPEKVK). 2 positions are modified to phosphoserine: S605 and S612. T616 carries the post-translational modification Phosphothreonine. A compositionally biased stretch (basic and acidic residues) spans 623-667 (WEEKKQREAERLPDRTEAREESEPEVKEDVIEKAELEEMEEVHPS). A phosphoserine mark is found at S644, S667, and S787. Composition is skewed to polar residues over residues 847-860 (EDQSVASLTAPQTE) and 871-883 (TVTSIPSSRTEAT). 4 positions are modified to phosphoserine: S874, S877, S878, and S891. T894 carries the phosphothreonine modification. 9 positions are modified to phosphoserine: S896, S900, S909, S986, S996, S1004, S1013, S1019, and S1029. The span at 1031–1065 (GDTKRTPGVGKEDAAEETVKPGPEEGTLEKEEKVP) shows a compositional bias: basic and acidic residues. 12 positions are modified to phosphoserine: S1069, S1144, S1146, S1160, S1172, S1190, S1200, S1203, S1209, S1218, S1221, and S1264. A compositionally biased stretch (basic and acidic residues) spans 1131-1146 (KPQKDEVLRYPDRSLS). Polar residues predominate over residues 1154–1169 (SVLSVPSPDTANQEPT). Polar residues-rich tracts occupy residues 1211-1224 (DVSSKQLSPESLGT) and 1264-1278 (SPPTDGTTRYSAQTD). Low complexity predominate over residues 1289-1299 (PASSFSHSTPS). S1326, S1329, S1544, S1600, and S1626 each carry phosphoserine. Composition is skewed to basic and acidic residues over residues 1338-1548 (IAIK…EKKD) and 1586-1605 (QEDKTRKPKMLEEKSPEKVK). Residues 1632 to 1642 (RAREQEEKYWR) show a composition bias toward basic and acidic residues. Disordered stretches follow at residues 1632–1684 (RARE…RYWR), 1713–1879 (DGQG…FSWG), and 1892–2673 (EGAA…LVNG). S1654 carries the post-translational modification Phosphoserine. A compositionally biased stretch (basic and acidic residues) spans 1655 to 1666 (PTREEPAGEQKE). Phosphoserine is present on residues S1675, S1749, S1762, S1776, S1791, S1797, S1801, S1812, and S1818. The span at 1852–1867 (LPPAPLSPAPGPPTPA) shows a compositional bias: pro residues. Residues 1907-1929 (KDYRKAEGEREEEGRAEAPDKSS) show a composition bias toward basic and acidic residues. S1931 is modified (phosphoserine). A compositionally biased stretch (basic and acidic residues) spans 1951 to 1964 (PEQREPTPYPDERS). At T1957 the chain carries Phosphothreonine. The segment covering 2019–2033 (SPISPKSLQSDTPTF) has biased composition (polar residues). At S2022 the chain carries Phosphoserine. The span at 2042–2066 (TVPPRPEPGPSMEPSLTPPAVPPRA) shows a compositional bias: pro residues. Phosphothreonine is present on T2058. Phosphoserine occurs at positions 2074, 2104, 2106, and 2108. Over residues 2086-2122 (PDRRSPSPKESGRSHWDDSTSDSELEKGAREQPEKEA) the composition is skewed to basic and acidic residues. Over residues 2175-2184 (PAPPQLPSPA) the composition is skewed to pro residues. S2235, S2252, S2256, S2259, and S2260 each carry phosphoserine. The segment covering 2257–2268 (EGSSSEATTPVI) has biased composition (polar residues). Over residues 2312–2325 (ASLDLALAPAPSLP) the composition is skewed to low complexity. S2449 bears the Phosphoserine mark. A compositionally biased stretch (basic and acidic residues) spans 2461 to 2473 (IDDRDLSTEEVRL). Residues 2502-2514 (SASDSGSSQSDSD) are compositionally biased toward low complexity. Residues 2559–2575 (DPPPLPQPDPRPSPPRP) show a composition bias toward pro residues. Residues 2590-2602 (GRVERLREKEKVQ) show a composition bias toward basic and acidic residues. 2 positions are modified to phosphoserine: S2649 and S2664.

It belongs to the MAP1 family. As to quaternary structure, 3 different light chains, LC1 (a cleavage product of MAP1B), LC2 (a cleavage product of MAP1A) and LC3 (produced by one of the MAP1LC3 genes), can associate with the MAP1A or MAP1B heavy chains. Interacts with TIAM2. Interacts with guanylate kinase-like domain of DLG1, DLG2 and DLG4. Binds to CSNK1D. In terms of assembly, interacts with ELAVL4. Post-translationally, phosphorylated by CSNK1D. In terms of processing, LC2 is generated from MAP1A by proteolytic processing. As to expression, brain.

Its subcellular location is the cytoplasm. It is found in the cytoskeleton. Its function is as follows. Structural protein involved in the filamentous cross-bridging between microtubules and other skeletal elements. The protein is Microtubule-associated protein 1A (MAP1A) of Homo sapiens (Human).